Here is a 309-residue protein sequence, read N- to C-terminus: Mitochondrial succinate-fumarate transporter 1 (309 aa).

Solcar repeat units lie at residues 11-96, 108-196, and 208-298; these read IPPY…FQTA, RGRF…FDIL, and LQPW…VTGL. 6 helical membrane passes run 17 to 37, 65 to 85, 111 to 131, 171 to 191, 214 to 234, and 273 to 293; these read AVSGSLGGVVEACCLQPIDVI, VRALWKGLTPFATHLTLKYTL, FLSGFGAGVLEALAIVTPFEV, GAAPTVMRNGTNQAVMFTAKN, MISGFLAGTAGPFCTGPFDVV, and GLLPRLMRIPPGQAIMWAVAD.

This sequence belongs to the mitochondrial carrier (TC 2.A.29) family. In terms of tissue distribution, expressed in root tips, cotyledons, hypocotyls, leaves, trichomes, stems, flowers, carpels, anthers, pollen and abscission zone of siliques.

It localises to the mitochondrion inner membrane. Functionally, may transport cytoplasmic succinate, derived from fatty acid oxidation, into the mitochondrial matrix in exchange of fumarate during lipid mobilization in seed germination. Conversion of seed-reserved triacylglycerols into sucrose is necessary for growth before the onset of photosynthesis and involves fatty acid beta-oxidation, the glyoxylate cycle and gluconeogenesis. This chain is Mitochondrial succinate-fumarate transporter 1 (SFC1), found in Arabidopsis thaliana (Mouse-ear cress).